Reading from the N-terminus, the 207-residue chain is Protein dct-5 (207 aa).

The chain crosses the membrane as a helical span at residues 13–33 (LNFILSIMNSYLFVLIVSIGF).

The protein localises to the membrane. In terms of biological role, acts downstream of daf-16/foxo to suppress tumors induced by disruption of gld-1. Potentially a direct target of daf-15/foxo. In Caenorhabditis elegans, this protein is Protein dct-5 (dct-5).